The following is a 1890-amino-acid chain: Callose synthase 9 (1890 aa).

Residues 1 to 489 (MSRAESSWER…EHRTFLHLYH (489 aa)) lie on the Cytoplasmic side of the membrane. The chain crosses the membrane as a helical span at residues 490 to 510 (SFHRLWIFLAMMFQALAIIAF). Over 511-523 (NKDDLTSRKTLLQ) the chain is Extracellular. A helical transmembrane segment spans residues 524-544 (ILSLGPTFVVMKFSESVLEVI). Topologically, residues 545–560 (MMYGAYSTTRRLAVSR) are cytoplasmic. The chain crosses the membrane as a helical span at residues 561-581 (IFLRFIWFGLASVFISFLYVK). Over 582 to 591 (SLKAPNSDSP) the chain is Extracellular. A helical membrane pass occupies residues 592–612 (IVQLYLIVIAIYGGVQFFFSI). Residues 613 to 658 (LMRIPTCHNIANKCDRWPVIRFFKWMRQERHYVGRGMYERTSDFIK) lie on the Cytoplasmic side of the membrane. A helical transmembrane segment spans residues 659–679 (YLLFWLVVLSAKFSFAYFLQI). At 680 to 722 (KPLVGPTRMIVKQNNIPYSWHDFVSRKNYNALTVASLWAPVVA) the chain is on the extracellular side. The chain crosses the membrane as a helical span at residues 723-743 (IYLLDIHIFYTIFSAFLGFLL). Residues 744–1457 (GARDRLGEIR…QLLDFFRMMS (714 aa)) are Cytoplasmic-facing. The helical transmembrane segment at 1458–1478 (FFFTTVGFYLCTMLTVLTVYI) threads the bilayer. The Extracellular segment spans residues 1479–1512 (FLYGRAYLALSGVGATIRERAILLDDTALSAALN). A helical transmembrane segment spans residues 1513-1533 (AQFLFQIGVFTAVPMVLGFIL). The Cytoplasmic portion of the chain corresponds to 1534-1539 (EQGFLQ). The helical transmembrane segment at 1540–1560 (AIVSFITMQFQLCTVFFTFSL) threads the bilayer. Residues 1561–1609 (GTRTHYFGRTILHGGARYQATGRGFVVKHIKFSENYRLYSRSHFVKAME) lie on the Extracellular side of the membrane. The next 2 membrane-spanning stretches (helical) occupy residues 1610-1630 (VILL…AVSY) and 1631-1651 (ILLT…PYLF). The Extracellular segment spans residues 1652–1703 (NPAGFEWQKVVEDFKEWTNWLFYRGGIGVKGAESWEAWWEEELSHIRTLSGR). Residues 1704–1724 (IMETILSLRFFIFQYGIVYKL) form a helical membrane-spanning segment. The Cytoplasmic segment spans residues 1725-1732 (KLQGSDTS). Residues 1733–1753 (FAVYGWSWVAFAMIIVLFKVF) form a helical membrane-spanning segment. The Extracellular portion of the chain corresponds to 1754-1768 (TFSQKISVNFQLLLR). The chain crosses the membrane as a helical span at residues 1769 to 1789 (FIQGLSLLMALAGIIVAVVLT). Residues 1790 to 1795 (PLSVTD) lie on the Cytoplasmic side of the membrane. The helical transmembrane segment at 1796-1816 (IFACVLAFIPTGWGILSIACA) threads the bilayer. Residues 1817-1838 (WKPVLKRMGMWKSIRSLARLYD) lie on the Extracellular side of the membrane. The helical transmembrane segment at 1839 to 1859 (ALMGMLIFLPVALCSWFPFVS) threads the bilayer. Topologically, residues 1860–1890 (TFQTRMMFNQAFSRGLEISLILAGDNPNSGL) are cytoplasmic.

This sequence belongs to the glycosyltransferase 48 family.

The protein resides in the cell membrane. It catalyses the reaction [(1-&gt;3)-beta-D-glucosyl](n) + UDP-alpha-D-glucose = [(1-&gt;3)-beta-D-glucosyl](n+1) + UDP + H(+). Its function is as follows. Involved in sporophytic and gametophytic development. Required for normal plant development. During pollen formation, required for the entry of microspores into mitosis and microspore symmetric division. May be required for correct temporal and spatial control of callose deposition during pollen mitosis. During plant growth and development, callose is found as a transitory component of the cell plate in dividing cells, is a major component of pollen mother cell walls and pollen tubes, and is found as a structural component of plasmodesmatal canals. The polypeptide is Callose synthase 9 (CALS9) (Arabidopsis thaliana (Mouse-ear cress)).